The following is a 124-amino-acid chain: Small ribosomal subunit protein uS12 (124 aa).

The disordered stretch occupies residues 1-23; that stretch reads MATINQLVRKPRVRQKQKSNVPA. 3-methylthioaspartic acid is present on aspartate 89. The disordered stretch occupies residues 103–124; that stretch reads DTAGVGDRRQGRSKYGAKRPKG. Basic residues predominate over residues 113 to 124; the sequence is GRSKYGAKRPKG.

This sequence belongs to the universal ribosomal protein uS12 family. Part of the 30S ribosomal subunit. Contacts proteins S8 and S17. May interact with IF1 in the 30S initiation complex.

Functionally, with S4 and S5 plays an important role in translational accuracy. Interacts with and stabilizes bases of the 16S rRNA that are involved in tRNA selection in the A site and with the mRNA backbone. Located at the interface of the 30S and 50S subunits, it traverses the body of the 30S subunit contacting proteins on the other side and probably holding the rRNA structure together. The combined cluster of proteins S8, S12 and S17 appears to hold together the shoulder and platform of the 30S subunit. This chain is Small ribosomal subunit protein uS12, found in Nitrosococcus oceani (strain ATCC 19707 / BCRC 17464 / JCM 30415 / NCIMB 11848 / C-107).